Here is a 727-residue protein sequence, read N- to C-terminus: UvrABC system protein C (727 aa).

A GIY-YIG domain is found at 16-95 (VDPGVYKFRD…IKEFDPRFNV (80 aa)). The 36-residue stretch at 208-243 (DRLVRQLEARMQEASEELDFETAARLRDDVGALRRA) folds into the UVR domain. Disordered stretches follow at residues 503 to 527 (DADQ…QTGR) and 679 to 727 (SADV…TGVE). Positions 701–711 (NGADIPREPVE) are enriched in basic and acidic residues. Over residues 718–727 (QSASQRTGVE) the composition is skewed to polar residues.

Belongs to the UvrC family. In terms of assembly, interacts with UvrB in an incision complex.

The protein localises to the cytoplasm. Its function is as follows. The UvrABC repair system catalyzes the recognition and processing of DNA lesions. UvrC both incises the 5' and 3' sides of the lesion. The N-terminal half is responsible for the 3' incision and the C-terminal half is responsible for the 5' incision. The chain is UvrABC system protein C from Rhodococcus jostii (strain RHA1).